An 89-amino-acid polypeptide reads, in one-letter code: MVKNSFNSVIPQEENKGSVEFQVFNFTNKIRRLTSHLELHRKDYLSQRGLRGILGKRQRLLAYLSKKNRVRYQELIGQLDIREPKTREF.

It belongs to the universal ribosomal protein uS15 family. As to quaternary structure, part of the 30S ribosomal subunit.

It localises to the plastid. The protein localises to the chloroplast. In Chloranthus spicatus (Chulantree), this protein is Small ribosomal subunit protein uS15c (rps15).